Here is a 525-residue protein sequence, read N- to C-terminus: Bifunctional purine biosynthesis protein PurH (525 aa).

The MGS-like domain occupies Met-1 to Thr-145.

It belongs to the PurH family.

It catalyses the reaction (6R)-10-formyltetrahydrofolate + 5-amino-1-(5-phospho-beta-D-ribosyl)imidazole-4-carboxamide = 5-formamido-1-(5-phospho-D-ribosyl)imidazole-4-carboxamide + (6S)-5,6,7,8-tetrahydrofolate. It carries out the reaction IMP + H2O = 5-formamido-1-(5-phospho-D-ribosyl)imidazole-4-carboxamide. The protein operates within purine metabolism; IMP biosynthesis via de novo pathway; 5-formamido-1-(5-phospho-D-ribosyl)imidazole-4-carboxamide from 5-amino-1-(5-phospho-D-ribosyl)imidazole-4-carboxamide (10-formyl THF route): step 1/1. Its pathway is purine metabolism; IMP biosynthesis via de novo pathway; IMP from 5-formamido-1-(5-phospho-D-ribosyl)imidazole-4-carboxamide: step 1/1. The protein is Bifunctional purine biosynthesis protein PurH of Alcanivorax borkumensis (strain ATCC 700651 / DSM 11573 / NCIMB 13689 / SK2).